A 174-amino-acid chain; its full sequence is F-box protein At1g70360 (174 aa).

The F-box domain maps to 136-174 (PPCFISLPRELKHKILESLPGVDIGTLACVSSELRDMAS).

This chain is F-box protein At1g70360, found in Arabidopsis thaliana (Mouse-ear cress).